Reading from the N-terminus, the 141-residue chain is Putative pre-16S rRNA nuclease (141 aa).

The protein belongs to the YqgF nuclease family.

The protein resides in the cytoplasm. Its function is as follows. Could be a nuclease involved in processing of the 5'-end of pre-16S rRNA. The polypeptide is Putative pre-16S rRNA nuclease (Shewanella denitrificans (strain OS217 / ATCC BAA-1090 / DSM 15013)).